An 842-amino-acid chain; its full sequence is Translation initiation factor IF-2 (842 aa).

2 disordered regions span residues 1-41 (MVAK…GFPD) and 112-219 (RPNR…QTYQ). Composition is skewed to basic and acidic residues over residues 32 to 41 (PEDKKQGFPD) and 153 to 165 (RRGE…RDFS). The tr-type G domain maps to 328–497 (ARPPVVTVMG…MLQAEVMELR (170 aa)). The segment at 337 to 344 (GHVDHGKT) is G1. 337-344 (GHVDHGKT) contributes to the GTP binding site. The interval 362-366 (GITQH) is G2. The tract at residues 383-386 (DTPG) is G3. GTP contacts are provided by residues 383-387 (DTPGH) and 437-440 (NKID). Residues 437-440 (NKID) are G4. The G5 stretch occupies residues 473–475 (SAL).

It belongs to the TRAFAC class translation factor GTPase superfamily. Classic translation factor GTPase family. IF-2 subfamily.

It localises to the cytoplasm. Functionally, one of the essential components for the initiation of protein synthesis. Protects formylmethionyl-tRNA from spontaneous hydrolysis and promotes its binding to the 30S ribosomal subunits. Also involved in the hydrolysis of GTP during the formation of the 70S ribosomal complex. The polypeptide is Translation initiation factor IF-2 (infB) (Treponema pallidum (strain Nichols)).